Here is a 196-residue protein sequence, read N- to C-terminus: MEARLVLGSSSERRKAVLESFRIPFICVSPDFDERSIVYSGDPFKYTKELAWNKANVVRSQGFSDALIITADTVVVYKGEVFNKPESEEHAVEMLRTLSGSSHSVITTLVLMQNEKVLSASENTQVSFIDIPPQHLKTYVRSFSSLKRCGGYCVQDGGGLIIKQIEGCVYNIQGLPIKTLNQLLMEFNISLWDYLV.

Asp72 functions as the Proton acceptor in the catalytic mechanism.

This sequence belongs to the Maf family. YhdE subfamily. The cofactor is a divalent metal cation.

Its subcellular location is the cytoplasm. It catalyses the reaction dTTP + H2O = dTMP + diphosphate + H(+). It carries out the reaction UTP + H2O = UMP + diphosphate + H(+). In terms of biological role, nucleoside triphosphate pyrophosphatase that hydrolyzes dTTP and UTP. May have a dual role in cell division arrest and in preventing the incorporation of modified nucleotides into cellular nucleic acids. In Chlamydia trachomatis serovar L2 (strain ATCC VR-902B / DSM 19102 / 434/Bu), this protein is dTTP/UTP pyrophosphatase.